Here is a 47-residue protein sequence, read N- to C-terminus: Sperm protamine P1 (47 aa).

This sequence belongs to the protamine P1 family. In terms of tissue distribution, testis.

It localises to the nucleus. The protein resides in the chromosome. In terms of biological role, protamines substitute for histones in the chromatin of sperm during the haploid phase of spermatogenesis. They compact sperm DNA into a highly condensed, stable and inactive complex. This chain is Sperm protamine P1 (PRM1), found in Galeopterus variegatus (Malayan flying lemur).